Reading from the N-terminus, the 485-residue chain is Glutamyl-tRNA(Gln) amidotransferase subunit A 1 (485 aa).

Catalysis depends on charge relay system residues lysine 79 and serine 154. Serine 178 (acyl-ester intermediate) is an active-site residue.

Belongs to the amidase family. GatA subfamily. Heterotrimer of A, B and C subunits.

The enzyme catalyses L-glutamyl-tRNA(Gln) + L-glutamine + ATP + H2O = L-glutaminyl-tRNA(Gln) + L-glutamate + ADP + phosphate + H(+). Functionally, allows the formation of correctly charged Gln-tRNA(Gln) through the transamidation of misacylated Glu-tRNA(Gln) in organisms which lack glutaminyl-tRNA synthetase. The reaction takes place in the presence of glutamine and ATP through an activated gamma-phospho-Glu-tRNA(Gln). The polypeptide is Glutamyl-tRNA(Gln) amidotransferase subunit A 1 (gatA1) (Clostridium acetobutylicum (strain ATCC 824 / DSM 792 / JCM 1419 / IAM 19013 / LMG 5710 / NBRC 13948 / NRRL B-527 / VKM B-1787 / 2291 / W)).